We begin with the raw amino-acid sequence, 331 residues long: UDP-N-acetylenolpyruvoylglucosamine reductase (331 aa).

The FAD-binding PCMH-type domain occupies 54 to 221 (RVGGAAELYV…TQATFQLQPG (168 aa)). Residue Arg-200 is part of the active site. Ser-251 (proton donor) is an active-site residue. Residue Glu-321 is part of the active site.

It belongs to the MurB family. Requires FAD as cofactor.

It is found in the cytoplasm. It carries out the reaction UDP-N-acetyl-alpha-D-muramate + NADP(+) = UDP-N-acetyl-3-O-(1-carboxyvinyl)-alpha-D-glucosamine + NADPH + H(+). It participates in cell wall biogenesis; peptidoglycan biosynthesis. Cell wall formation. The polypeptide is UDP-N-acetylenolpyruvoylglucosamine reductase (Nostoc sp. (strain PCC 7120 / SAG 25.82 / UTEX 2576)).